The following is a 42-amino-acid chain: Alpha-conotoxin VnIB (42 aa).

A propeptide spanning residues 1 to 22 (ASDGRNAAADDKASDPIALTVR) is cleaved from the precursor. Disulfide bonds link Cys25/Cys31 and Cys26/Cys38. Gly39 carries the glycine amide modification.

It belongs to the conotoxin A superfamily. As to expression, expressed by the venom duct.

It localises to the secreted. Alpha-conotoxins act on postsynaptic membranes, they bind to the nicotinic acetylcholine receptors (nAChR) and thus inhibit them. This toxin potently and selectively inhibits human and rat alpha-6-beta-4/CHRNA6-CHRNB4 nAChR (IC(50)=12 nM on rat nAChR). It exhibits rapid binding and unbinding at this receptor. It also shows activity on rat alpha-6-beta-4/CHRNA6-CHRNB4 (IC(50)=12 nM), human alpha-6/alpha-3-beta-4 (CHRNA6/CHRNA3-CHRNB4) (IC(50)=5.3 nM), rat alpha-6/alpha-3-beta-4 (CHRNA6/CHRNA3-CHRNB4) (IC(50)=18 nM), rat alpha-3-beta-4/CHRNA3-CHRNB4 (IC(50)=320 nM), and rat alpha-6/alpha-3-beta-2-beta-3 (CHRNA6/CHRNA3-CHRNB2-CHRNB3) (IC(50)=4 uM). In Conus ventricosus (Mediterranean cone), this protein is Alpha-conotoxin VnIB.